Reading from the N-terminus, the 398-residue chain is Cytohesin-1 (398 aa).

N-acetylmethionine is present on methionine 1. The interval 1-60 (MEDDDSYVPSDLTAEERQELENIRRRKQELLADIQRLKEEIAEVANEIESLGSTEERKNM) is necessary for localization at adherens junction. Positions 10–67 (SDLTAEERQELENIRRRKQELLADIQRLKEEIAEVANEIESLGSTEERKNMQRNKQVA) form a coiled coil. The region spanning 73–202 (FNMDPKKGIQ…IIMLNTSLHN (130 aa)) is the SEC7 domain. A PH domain is found at 260 to 377 (NPDREGWLLK…WIKCIKAAIS (118 aa)). A 1,2-diacyl-sn-glycero-3-phospho-(1D-myo-inositol-3,4,5-trisphosphate) contacts are provided by residues 269–277 (KLGGGRVKT), arginine 281, tyrosine 292, arginine 302, and asparagine 351. The interval 388–396 (RKKKVSSTK) is C-terminal autoinhibitory region.

As to quaternary structure, interacts with TRIM23 and CYTIP. Interacts (via coiled-coil domain) with FRMD4A (via coiled-coil domain). Interacts with FRMD4B. Found in a complex with PARD3, CYTH1 and FRMD4A. Interacts (via N-terminal domain) with INAVA (via N-terminal domain). Post-translationally, ubiquitinated by SCF(FBXW11) E3 ubiquitin-protein ligase complex. Ubiquitination induces proteasomal degradation. In terms of tissue distribution, expressed in colon and small intestine (at protein level).

The protein resides in the cell membrane. It localises to the cytoplasm. The protein localises to the cytosol. Its subcellular location is the cell junction. It is found in the tight junction. The protein resides in the adherens junction. Promotes guanine-nucleotide exchange on ARF1, ARF5 and ARF6. Promotes the activation of ARF factors through replacement of GDP with GTP. Plays an important role in membrane trafficking, during junctional remodeling and epithelial polarization, through regulation of ARF6 activity. This is Cytohesin-1 (Cyth1) from Mus musculus (Mouse).